The primary structure comprises 285 residues: Nudix hydrolase 15, mitochondrial (285 aa).

A mitochondrion-targeting transit peptide spans 1–23 (MFLLYRRLPSFARTTTTTLLCKS). M24 carries the post-translational modification N-acetylmethionine. Disordered stretches follow at residues 51–72 (RQYK…TDQE) and 129–152 (THSG…GMTA). The region spanning 99 to 255 (PKRAAVLICL…DKDYMIWGLT (157 aa)) is the Nudix hydrolase domain. The short motif at 140-161 (KAEEDDKDDGMTATREAEEEIG) is the Nudix box element. Mg(2+) contacts are provided by E155 and E159.

This sequence belongs to the Nudix hydrolase family. It depends on Mg(2+) as a cofactor. Requires Mn(2+) as cofactor. In terms of tissue distribution, expressed in roots, leaves, stems and inflorescences.

The protein localises to the mitochondrion. Functionally, coenzyme A diphosphatase which mediates the cleavage of oxidized CoA. Can use malonyl-CoA, hexanoyl-CoA, lauroyl-CoA, myristoyl-CoA and palmitoyl-CoA as substrates, but not isobutyryl-CoA or propionyl-CoA. In Arabidopsis thaliana (Mouse-ear cress), this protein is Nudix hydrolase 15, mitochondrial (NUDT15).